The following is a 625-amino-acid chain: MAGKKRESSLQIALSNQEQWEEALSTKGLQVVDVYQAWCGPCKPTVSLFRKIKNELGDDLLHFAVAESDTIDSLVKYRGKCEPTFLFLAGGELVAVVRGANGPLLQKTIIEQLAAEKKVLNQGSERHVIKDEVLLEEEDEIAPVQAQTEDEELVPSGKSYTVAIIKPDAVAHGKTDEIIMKIQESGFEILANEERTMTESEAREFYQHRAGEEKFQELIQFMSSGPCHILIISKSEEDEDVIPAWREFIGPTDVEIAKKEKPESLRAQYGTEVLYNAVHGSNDREQASRELAFFFPNFKISNESLKELTSVKPERTLALIRPEILKERKDEILQSIKDAGFSIAMQKEVMLTEHQVQEFYKEHINEDYYPALLKQMTSGPVLALALVKDNAVGHWRNMLGPASLSQALSEAPDSLRAQFAPSDSETNQLHGSSTTEEAKKEINFFFPVEHTLATIKPDALEEHRDEILEQIQGAGFTISQIKEANLNREMAEEFYKEHKGKPFFEQLVNYMCRGPCLMMILSKENAVHEWRSLMGPTDPAEAQKVLPDSLRGKFAKSILQNAVHGSSNSDHAMEKIKFIFGDIDLDRIVHESFGETPETSASDISRNAAAQGDDPEQDESKEMEE.

Residues 158 to 302 (KSYTVAIIKP…FFFPNFKISN (145 aa)) form an NDK region. The segment at 594-625 (GETPETSASDISRNAAAQGDDPEQDESKEMEE) is disordered. The span at 613–625 (DDPEQDESKEMEE) shows a compositional bias: acidic residues.

This sequence belongs to the NDK family. Monomer and homodimer.

The protein localises to the cytoplasm. It is found in the cytoskeleton. The protein resides in the cilium axoneme. It localises to the dynein axonemal particle. May be a regulator of microtubule physiology. In Xenopus laevis (African clawed frog), this protein is Thioredoxin domain-containing protein 6.